Here is a 1416-residue protein sequence, read N- to C-terminus: DNA-directed RNA polymerase subunit beta' (1416 aa).

Positions 60, 62, 75, and 78 each coordinate Zn(2+). Residues Asp-449, Asp-451, and Asp-453 each contribute to the Mg(2+) site. Positions 781, 855, 862, and 865 each coordinate Zn(2+).

It belongs to the RNA polymerase beta' chain family. The RNAP catalytic core consists of 2 alpha, 1 beta, 1 beta' and 1 omega subunit. When a sigma factor is associated with the core the holoenzyme is formed, which can initiate transcription. It depends on Mg(2+) as a cofactor. The cofactor is Zn(2+).

The catalysed reaction is RNA(n) + a ribonucleoside 5'-triphosphate = RNA(n+1) + diphosphate. In terms of biological role, DNA-dependent RNA polymerase catalyzes the transcription of DNA into RNA using the four ribonucleoside triphosphates as substrates. The protein is DNA-directed RNA polymerase subunit beta' of Treponema pallidum (strain Nichols).